Consider the following 386-residue polypeptide: MSTADIIARCEALYEDLDFTAARQWKEADPSRKVIAYMPVYVPREIIHAAGMLPLGIMGGGDGLEVIHGDAFYQSYICRIPRSTIELGLSKRMDFVDGMLFPSICDVIRNLSGMWKLMFPGKYVRYFDVPQNYRDDVGGNYYTAELNELREGLEHLSGRKITDDALRASIKVYNENRKLVQDVYGLRSREPWKVPSADVYLLMRAGLVLPVEEHNQMLKDYLAAAVKVEAQKRDNCRVIINGSFCEQPPLNLIKSIELSGCYIVDDDYMIVHRFLRNEVSTAGDPMQNLSLAFLHESISTAAKYDDKEEDKGKYLLEQVRTNAAEGVIFAAPSFCDPALLERPMLADRCSENKVPYISFKYAENSGQMQPIREQAGTFADSIKLWS.

This sequence belongs to the FldB/FldC dehydratase alpha/beta subunit family. As to quaternary structure, heterotetramer composed of A, B, C, and D subunits. Iron-sulfur cluster serves as cofactor. It depends on an oxidized flavin as a cofactor.

It carries out the reaction cyclohexa-1,5-diene-1-carbonyl-CoA + oxidized 2[4Fe-4S]-[ferredoxin] + 2 ADP + 2 phosphate = reduced 2[4Fe-4S]-[ferredoxin] + benzoyl-CoA + 2 ATP + 2 H2O. The enzyme catalyses 3-hydroxybenzoyl-CoA + AH2 + 2 ATP + 2 H2O = 3-hydroxycyclohexa-1,5-diene-1-carbonyl-CoA + A + 2 ADP + 2 phosphate + 2 H(+). Functionally, catalyzes the anaerobic reduction of benzoyl-CoA and 3-hydroxybenzoyl-CoA to form cyclohexa-1,5-diene-1-carbonyl-CoA and 3-hydroxycyclohexa-1,5-diene-1-carbonyl-CoA, respectively. The enzyme also reduces other benzoyl-CoA analogs with small substituents at the aromatic ring. The sequence is that of Benzoyl-CoA reductase subunit C (bcrC) from Thauera aromatica.